Here is a 359-residue protein sequence, read N- to C-terminus: 4-galactosyl-N-acetylglucosaminide 3-alpha-L-fucosyltransferase FUT6 (359 aa).

Over 1-14 the chain is Cytoplasmic; it reads MDPLGPAKPQWSWR. Residues 15–34 form a helical; Signal-anchor for type II membrane protein membrane-spanning segment; that stretch reads CCLTTLLFQLLMAVCFFSYL. The Lumenal portion of the chain corresponds to 35–359; it reads RVSQDDPTVY…QTRGIAAWFT (325 aa). N-linked (GlcNAc...) asparagine glycosylation is found at N46, N91, N153, and N184. Positions 73–112 are determines site-specific fucosylation; it reads KPIALPRCSEMVPGTADCNITADRKVYPQADAVIVHHREV.

The protein belongs to the glycosyltransferase 10 family. Homodimer and monomer. Monomer (secreted form). Post-translationally, N-glycosylated. In terms of processing, proteolytic cleavage releases a secreted glycoform of 43 kDa. In terms of tissue distribution, kidney, liver, colon, small intestine, bladder, uterus and salivary gland.

Its subcellular location is the golgi apparatus. It localises to the golgi stack membrane. The protein resides in the secreted. It catalyses the reaction a beta-D-galactosyl-(1-&gt;4)-N-acetyl-beta-D-glucosaminyl derivative + GDP-beta-L-fucose = a beta-D-galactosyl-(1-&gt;4)-[alpha-L-fucosyl-(1-&gt;3)]-N-acetyl-beta-D-glucosaminyl derivative + GDP + H(+). The enzyme catalyses an N-acetyl-alpha-neuraminyl-(2-&gt;3)-beta-D-galactosyl-(1-&gt;4)-N-acetyl-beta-D-glucosaminyl derivative + GDP-beta-L-fucose = an alpha-Neu5Ac-(2-&gt;3)-beta-D-Gal-(1-&gt;4)-[alpha-L-Fuc-(1-&gt;3)]-beta-D-GlcNAc derivative + GDP + H(+). The catalysed reaction is an alpha-Neu5Ac-(2-&gt;3)-beta-D-Gal-(1-&gt;4)-beta-D-GlcNAc-(1-&gt;3)-beta-D-Gal-(1-&gt;4)-[alpha-L-Fuc-(1-&gt;3)]-beta-D-GlcNAc derivative + GDP-beta-L-fucose = an alpha-Neu5Ac-(2-&gt;3)-beta-D-Gal-(1-&gt;4)-[alpha-L-Fuc-(1-&gt;3)]-beta-D-GlcNAc-(1-&gt;3)-beta-D-Gal-(1-&gt;4)-[alpha-L-Fuc-(1-&gt;3)]-beta-D-GlcNAc derivative + GDP + H(+). It carries out the reaction a neolactoside nLc6Cer + GDP-beta-L-fucose = beta-D-Gal-(1-&gt;4)-[alpha-L-Fuc-(1-&gt;3)]-beta-D-GlcNAc-(1-&gt;3)-beta-D-Gal-(1-&gt;4)-beta-D-GlcNAc-(1-&gt;3)-beta-D-Gal-(1-&gt;4)-beta-D-Glc-(1&lt;-&gt;1')-Cer + GDP + H(+). It catalyses the reaction a neolactoside nLc6Cer + GDP-beta-L-fucose = beta-D-galactosyl-(1-&gt;4)-N-acetyl-beta-D-glucosaminyl-(1-&gt;3)-beta-D-galactosyl-(1-&gt;4)-[alpha-L-fucosyl-(1-&gt;3)]-N-acetyl-beta-D-glucosaminyl-(1-&gt;3)-beta-D-galactosyl-(1-&gt;4)-beta-D-glucosyl-(1&lt;-&gt;1')-ceramide + GDP + H(+). The enzyme catalyses a neolactoside VI(3)-alpha-NeuNAc-nLc6Cer + GDP-beta-L-fucose = a neolactoside VI(3)-alpha-NeuAc,V(3)-alphaFuc-nLc6Cer + GDP + H(+). The catalysed reaction is beta-D-galactosyl-(1-&gt;4)-N-acetyl-D-glucosamine + GDP-beta-L-fucose = beta-D-galactosyl-(1-&gt;4)-[alpha-L-fucosyl-(1-&gt;3)]-N-acetyl-D-glucosamine + GDP + H(+). It carries out the reaction N-acetyl-alpha-neuraminosyl-(2-&gt;3)-beta-D-galactosyl-(1-&gt;4)-N-acetyl-beta-D-glucosamine + GDP-beta-L-fucose = N-acetyl-alpha-neuraminosyl-(2-&gt;3)-beta-D-galactosyl-(1-&gt;4)-[alpha-L-fucosyl-(1-&gt;3)]-N-acetyl-beta-D-glucosamine + GDP + H(+). It catalyses the reaction lactose + GDP-beta-L-fucose = beta-D-galactosyl-(1-&gt;4)-[alpha-L-fucosyl-(1-&gt;3)]-D-glucose + GDP + H(+). The enzyme catalyses alpha-L-Fuc-(1-&gt;2)-beta-D-Gal-(1-&gt;4)-D-Glc + GDP-beta-L-fucose = alpha-L-Fuc-(1-&gt;2)-beta-D-Gal-(1-&gt;4)-[alpha-L-Fuc-(1-&gt;3)]-D-Glc + GDP + H(+). The catalysed reaction is a beta-D-galactosyl-(1-&gt;4)-N-acetyl-beta-D-6-sulfooxy-glucosaminyl derivative + GDP-beta-L-fucose = a beta-D-galactosyl-(1-&gt;4)-[alpha-L-fucosyl-(1-&gt;3)]-N-acetyl-beta-D-6-sulfooxy-glucosaminyl derivative + GDP + H(+). The protein operates within protein modification; protein glycosylation. Its function is as follows. Catalyzes the transfer of L-fucose, from a guanosine diphosphate-beta-L-fucose, to the N-acetyl glucosamine (GlcNAc) of a distal alpha2,3 sialylated lactosamine unit of a glycoprotein- or a glycolipid-linked sialopolylactosamines chain or of a distal or internal lactosamine unit of a neutral glycoprotein- or a glycolipid-linked polylactosamines chain through an alpha-1,3 glycosidic linkage and participates in surface expression of the sialyl Lewis X (sLe(x)), Lewis X (Le(x)) and non sialylated VIM2 determinants. Moreover transfers fucose to H-type 2 (Fucalpha1-2Galbeta1-4GlcNAc) chain acceptor substrates and participates in difucosylated sialyl Lewis x determinants. Also fucosylates a polylactosamine substrate having a 6 sulfate modification at the GlcNAc moiety and gives rise to sialyl and non-sialyl 6-sulfo lewis X. Does not have activity towards type 1 ((Galbeta1-3GlcNAc)) and H-type 1 chain (Fucalpha1-2Galbeta1-3GlcNAc) acceptors substrates. Does not have alpha(1,3)-fucosyltransferase activity. The chain is 4-galactosyl-N-acetylglucosaminide 3-alpha-L-fucosyltransferase FUT6 from Homo sapiens (Human).